A 239-amino-acid polypeptide reads, in one-letter code: tRNA1(Val) (adenine(37)-N6)-methyltransferase (239 aa).

This sequence belongs to the methyltransferase superfamily. tRNA (adenine-N(6)-)-methyltransferase family.

Its subcellular location is the cytoplasm. It catalyses the reaction adenosine(37) in tRNA1(Val) + S-adenosyl-L-methionine = N(6)-methyladenosine(37) in tRNA1(Val) + S-adenosyl-L-homocysteine + H(+). Specifically methylates the adenine in position 37 of tRNA(1)(Val) (anticodon cmo5UAC). In Vibrio vulnificus (strain YJ016), this protein is tRNA1(Val) (adenine(37)-N6)-methyltransferase.